The primary structure comprises 177 residues: Peptide deformylase 2 (177 aa).

The Fe cation site is built by cysteine 99 and histidine 141. Glutamate 142 is a catalytic residue. Histidine 145 lines the Fe cation pocket.

This sequence belongs to the polypeptide deformylase family. Requires Fe(2+) as cofactor.

The catalysed reaction is N-terminal N-formyl-L-methionyl-[peptide] + H2O = N-terminal L-methionyl-[peptide] + formate. Removes the formyl group from the N-terminal Met of newly synthesized proteins. Requires at least a dipeptide for an efficient rate of reaction. N-terminal L-methionine is a prerequisite for activity but the enzyme has broad specificity at other positions. The chain is Peptide deformylase 2 from Ralstonia nicotianae (strain ATCC BAA-1114 / GMI1000) (Ralstonia solanacearum).